A 258-amino-acid polypeptide reads, in one-letter code: D-aminoacyl-tRNA deacylase (258 aa).

It belongs to the DtdA deacylase family. As to quaternary structure, monomer. Zn(2+) is required as a cofactor.

The enzyme catalyses a D-aminoacyl-tRNA + H2O = a tRNA + a D-alpha-amino acid + H(+). The catalysed reaction is glycyl-tRNA(Ala) + H2O = tRNA(Ala) + glycine + H(+). Functionally, D-aminoacyl-tRNA deacylase with broad substrate specificity. By recycling D-aminoacyl-tRNA to D-amino acids and free tRNA molecules, this enzyme counteracts the toxicity associated with the formation of D-aminoacyl-tRNA entities in vivo. The polypeptide is D-aminoacyl-tRNA deacylase (Cenarchaeum symbiosum (strain A)).